The following is an 81-amino-acid chain: uncharacterized protein (81 aa).

A run of 2 helical transmembrane segments spans residues 1–21 (MTLF…FSLL) and 27–47 (IFIY…HHFF).

Its subcellular location is the membrane. This is an uncharacterized protein from Saccharomyces cerevisiae (strain ATCC 204508 / S288c) (Baker's yeast).